Here is a 171-residue protein sequence, read N- to C-terminus: S-ribosylhomocysteine lyase (171 aa).

Positions 54, 58, and 128 each coordinate Fe cation.

This sequence belongs to the LuxS family. As to quaternary structure, homodimer. It depends on Fe cation as a cofactor.

The catalysed reaction is S-(5-deoxy-D-ribos-5-yl)-L-homocysteine = (S)-4,5-dihydroxypentane-2,3-dione + L-homocysteine. In terms of biological role, involved in the synthesis of autoinducer 2 (AI-2) which is secreted by bacteria and is used to communicate both the cell density and the metabolic potential of the environment. The regulation of gene expression in response to changes in cell density is called quorum sensing. Catalyzes the transformation of S-ribosylhomocysteine (RHC) to homocysteine (HC) and 4,5-dihydroxy-2,3-pentadione (DPD). The chain is S-ribosylhomocysteine lyase from Klebsiella pneumoniae (strain 342).